A 516-amino-acid polypeptide reads, in one-letter code: Nondiscriminating glutamyl-tRNA synthetase EARS2, mitochondrial (516 aa).

A mitochondrion-targeting transit peptide spans 1-39; it reads MRPAFIRGKWLSRTLELATGLGRRTCSSRESGREVRVRF. L-glutamate is bound at residue 38-40; that stretch reads RFA. The 'HIGH' region motif lies at 43–51; the sequence is PTGFLHLGG. Residue His48 participates in ATP binding. L-glutamate is bound by residues Glu74, 226-230, and Arg244; that span reads YHLAN. Residues Glu247 and 282 to 286 each bind ATP; that span reads KLSKR. Residues 282 to 286 carry the 'KMSKS' region motif; the sequence is KLSKR.

This sequence belongs to the class-I aminoacyl-tRNA synthetase family. Glutamate--tRNA ligase type 1 subfamily.

It localises to the mitochondrion matrix. It catalyses the reaction tRNA(Glx) + L-glutamate + ATP = L-glutamyl-tRNA(Glx) + AMP + diphosphate. It carries out the reaction tRNA(Glu) + L-glutamate + ATP = L-glutamyl-tRNA(Glu) + AMP + diphosphate. The catalysed reaction is tRNA(Gln) + L-glutamate + ATP = L-glutamyl-tRNA(Gln) + AMP + diphosphate. In terms of biological role, non-discriminating glutamyl-tRNA synthetase that catalyzes aminoacylation of both mitochondrial tRNA(Glu) and tRNA(Gln) and participates in RNA aminoacylation for mitochondrial protein translation. Attachs glutamate to tRNA(Glu) or tRNA(Gln) in a two-step reaction: glutamate is first activated by ATP to form Glu-AMP and then transferred to the acceptor end of tRNA(Glu) or tRNA(Gln). The chain is Nondiscriminating glutamyl-tRNA synthetase EARS2, mitochondrial from Xenopus tropicalis (Western clawed frog).